A 307-amino-acid polypeptide reads, in one-letter code: Synaptophysin (307 aa).

Over 1–19 (MDVVNQLVAGGQFRVVKEP) the chain is Cytoplasmic. An MARVEL domain is found at 15–222 (VVKEPLGFVK…NLWFVFKETG (208 aa)). The chain crosses the membrane as a helical span at residues 20–43 (LGFVKVLQWVFAIFAFATCGSYTG). The Vesicular portion of the chain corresponds to 44 to 101 (ELRLSVECANKTESALNIEVEFEYPFRLHQVYFDAPSCVKGGTTKIFLVGDYSSSAEF). Residue N53 is glycosylated (N-linked (GlcNAc...) asparagine). Y75 carries the phosphotyrosine modification. A helical membrane pass occupies residues 102-125 (FVTVAVFAFLYSMGALATYIFLQN). Topologically, residues 126–132 (KYRENNK) are cytoplasmic. Residues 133 to 156 (GPMMDFLATAVFAFMWLVSSSAWA) traverse the membrane as a helical segment. Over 157-194 (KGLSDVKMATDPENIIKEMPMCRQTGNTCKELRDPVTS) the chain is Vesicular. The chain crosses the membrane as a helical span at residues 195-218 (GLNTSVVFGFLNLVLWVGNLWFVF). Over 219–307 (KETGWAAPFM…GAPTSFSNQM (89 aa)) the chain is Cytoplasmic. Residue T221 is modified to Phosphothreonine. Positions 233–307 (GAPEKQPAPG…GAPTSFSNQM (75 aa)) are disordered. Positions 248–258 (AGYGQGPGGYG) are enriched in gly residues. Positions 249–298 (GYGQGPGGYGPQDSYGPQGGYQPDYGQPASGGGGYGPQGDYGQQGYGQQG) are repeats, Gly-rich. The segment covering 259–276 (PQDSYGPQGGYQPDYGQP) has biased composition (low complexity). 2 positions are modified to phosphotyrosine: Y273 and Y289. The span at 277-296 (ASGGGGYGPQGDYGQQGYGQ) shows a compositional bias: gly residues.

Belongs to the synaptophysin/synaptobrevin family. As to quaternary structure, homohexamer or homotetramer. Interacts with SRCIN1. Interacts with VAMP2; the interaction is inhibited by interaction of VAPM2 with SEPT8. Ubiquitinated; mediated by SIAH1 or SIAH2 and leading to its subsequent proteasomal degradation. Post-translationally, phosphorylated by SRC. As to expression, expressed in the brain with expression in the cerebrum and the cerebellum.

It localises to the cytoplasmic vesicle. The protein resides in the secretory vesicle. It is found in the synaptic vesicle membrane. Its subcellular location is the synapse. The protein localises to the synaptosome. Functionally, possibly involved in structural functions as organizing other membrane components or in targeting the vesicles to the plasma membrane. Involved in the regulation of short-term and long-term synaptic plasticity. This chain is Synaptophysin (Syp), found in Rattus norvegicus (Rat).